We begin with the raw amino-acid sequence, 483 residues long: Dual specificity protein phosphatase CDC14C (483 aa).

Positions methionine 1–aspartate 45 are disordered. The Nucleolar localization signal motif lies at methionine 1 to aspartate 53. Low complexity predominate over residues alanine 12–serine 26. Positions proline 43–asparagine 197 are a. A linker region spans residues serine 198–glutamate 211. Positions asparagine 212 to lysine 378 are b. One can recognise a Tyrosine-protein phosphatase domain in the interval glycine 213–phenylalanine 373. Cysteine 313 acts as the Phosphocysteine intermediate in catalysis. The segment at glutamine 407–glutamine 426 is disordered. The segment covering aspartate 408–isoleucine 421 has biased composition (acidic residues). A helical transmembrane segment spans residues isoleucine 444–valine 466.

It belongs to the protein-tyrosine phosphatase family. Non-receptor class CDC14 subfamily.

It is found in the membrane. Its subcellular location is the nucleus. The protein resides in the nucleolus. The protein localises to the cytoplasm. It localises to the cytoskeleton. The enzyme catalyses O-phospho-L-tyrosyl-[protein] + H2O = L-tyrosyl-[protein] + phosphate. It catalyses the reaction O-phospho-L-seryl-[protein] + H2O = L-seryl-[protein] + phosphate. It carries out the reaction O-phospho-L-threonyl-[protein] + H2O = L-threonyl-[protein] + phosphate. Functionally, dual-specificity phosphatase. Preferentially dephosphorylates proteins modified by proline-directed kinases. This is Dual specificity protein phosphatase CDC14C from Symphalangus syndactylus (Siamang).